Consider the following 314-residue polypeptide: Homoserine O-succinyltransferase (314 aa).

Cys142 serves as the catalytic Acyl-thioester intermediate. Substrate-binding residues include Lys163 and Ser192. The active-site Proton acceptor is the His235. Glu237 is an active-site residue. Position 249 (Arg249) interacts with substrate.

It belongs to the MetA family.

It is found in the cytoplasm. The enzyme catalyses L-homoserine + succinyl-CoA = O-succinyl-L-homoserine + CoA. It participates in amino-acid biosynthesis; L-methionine biosynthesis via de novo pathway; O-succinyl-L-homoserine from L-homoserine: step 1/1. Functionally, transfers a succinyl group from succinyl-CoA to L-homoserine, forming succinyl-L-homoserine. This Shewanella frigidimarina (strain NCIMB 400) protein is Homoserine O-succinyltransferase.